Here is a 477-residue protein sequence, read N- to C-terminus: Zinc finger C3HC-type protein 1-like (477 aa).

The C3HC-type zinc finger occupies 95 to 149; the sequence is CAKYGWCNIECDMLKCSSCNAYLCASLQPILDFSKYKQRCVELQEALRKAHEKFC. The disordered stretch occupies residues 287–392; sequence SLSAPGTPVS…SSSSDTSPRS (106 aa). Positions 354-363 are enriched in polar residues; the sequence is SMGQGENTGL. Residues 370–379 show a composition bias toward basic residues; sequence SPHRRAKRPR. A compositionally biased stretch (low complexity) spans 382–392; sequence SSSSSDTSPRS.

In terms of processing, phosphorylated. May also be weakly phosphorylated on Tyr residues.

The protein localises to the nucleus. Its subcellular location is the nucleus envelope. Its function is as follows. Required for proper positioning of a substantial amount of TPR at the nuclear basket (NB) through interaction with TPR. This is Zinc finger C3HC-type protein 1-like (zc3hc1) from Xenopus laevis (African clawed frog).